The primary structure comprises 594 residues: Adenine deaminase 1 (594 aa).

It belongs to the metallo-dependent hydrolases superfamily. Adenine deaminase family. Mn(2+) serves as cofactor.

It catalyses the reaction adenine + H2O + H(+) = hypoxanthine + NH4(+). This chain is Adenine deaminase 1, found in Desulfotalea psychrophila (strain LSv54 / DSM 12343).